A 447-amino-acid polypeptide reads, in one-letter code: MRNPGAQDNVSVSQGMRAMFYMMKPSETAFQTVEEVPDYVKKATPFFIFLILLELVVSWILKGKPSGRLDDILTSMSAGVVSRLPNLFFRSLEVTSYIYIWENYRVCELPWDSPWTWYLTFLGVDFGYYWFHRMAHEINIIWAAHQAHHSSEDYNLSTALRQSVLQQYSSWVFYCPLALFVPPSVFAVHIQFNLLYQFWIHTEVIRTLGPLELVLNTPSHHRVHHGRNRYCIDKNYAGTLIIWDRIFGTFEAENEQVIYGLTHPIGTFEPFKVQFHHLLYIWTTFWATPGFCHKFSVLFKGPGWGPGKPRLGLSEEIPEVTGQEVPFTSSASQFLKIYAVLQFAVMLVFYEETFANTAVLSQVTILLRICFIILTLTSIGFLLDQRPKAAIVETLRCLLFLTLYRFGHLKPLIESLSFAFEIFFSVCIAFWGVRSITHLASGSWKKP.

The next 2 membrane-spanning stretches (helical) occupy residues 43–63 (ATPFFIFLILLELVVSWILKG) and 111–131 (WDSPWTWYLTFLGVDFGYYWF). A Fatty acid hydroxylase domain is found at 118-249 (YLTFLGVDFG…LIIWDRIFGT (132 aa)). Residues 132–136 (HRMAH) carry the Histidine box-1 motif. Residues 145 to 149 (HQAHH) carry the Histidine box-2 motif. Residues 170 to 190 (SWVFYCPLALFVPPSVFAVHI) traverse the membrane as a helical segment. The Histidine box-3 signature appears at 221–225 (HRVHH). A run of 3 helical transmembrane segments spans residues 334-354 (FLKIYAVLQFAVMLVFYEETF), 363-383 (VTILLRICFIILTLTSIGFLL), and 413-433 (IESLSFAFEIFFSVCIAFWGV).

This sequence belongs to the sterol desaturase family. TMEM195 subfamily. Fe cation serves as cofactor.

Its subcellular location is the endoplasmic reticulum membrane. The catalysed reaction is 1-O-(1,2-saturated-alkyl)-sn-glycerol + (6R)-L-erythro-5,6,7,8-tetrahydrobiopterin + O2 = a 1-(1-hydroxyalkyl)-sn-glycerol + (6R)-L-erythro-6,7-dihydrobiopterin + H2O. Its function is as follows. Glyceryl-ether monooxygenase that cleaves the O-alkyl bond of ether lipids. Ether lipids are essential components of brain membranes. The protein is Alkylglycerol monooxygenase (Agmo) of Rattus norvegicus (Rat).